We begin with the raw amino-acid sequence, 114 residues long: Ig heavy chain V region (114 aa).

One can recognise an Ig-like domain in the interval 1–106 (EVQLQQSGAE…AVRVISRYFD (106 aa)).

This chain is Ig heavy chain V region, found in Mus musculus (Mouse).